We begin with the raw amino-acid sequence, 349 residues long: Deoxyguanosinetriphosphate triphosphohydrolase-like protein (349 aa).

Positions 80–197 (RLTHTLEVAQ…VKYSDKIAYV (118 aa)) constitute an HD domain.

The protein belongs to the dGTPase family. Type 2 subfamily.

The chain is Deoxyguanosinetriphosphate triphosphohydrolase-like protein from Clostridium tetani (strain Massachusetts / E88).